Consider the following 152-residue polypeptide: Superoxide dismutase [Cu-Zn] (152 aa).

Cu cation-binding residues include H45, H47, and H62. C56 and C145 are disulfide-bonded. Zn(2+) is bound by residues H62, H70, H79, and D82. Cu cation is bound at residue H119.

This sequence belongs to the Cu-Zn superoxide dismutase family. As to quaternary structure, homodimer. The cofactor is Cu cation. Requires Zn(2+) as cofactor.

Its subcellular location is the cytoplasm. It carries out the reaction 2 superoxide + 2 H(+) = H2O2 + O2. Its function is as follows. Destroys radicals which are normally produced within the cells and which are toxic to biological systems. This Carica papaya (Papaya) protein is Superoxide dismutase [Cu-Zn] (SODCC).